We begin with the raw amino-acid sequence, 318 residues long: HPr kinase/phosphorylase (318 aa).

Catalysis depends on residues histidine 141 and lysine 162. ATP is bound at residue 156–163; that stretch reads GDSAMGKS. Serine 163 lines the Mg(2+) pocket. Aspartate 180 (proton acceptor; for phosphorylation activity. Proton donor; for dephosphorylation activity) is an active-site residue. The important for the catalytic mechanism of both phosphorylation and dephosphorylation stretch occupies residues 204–213; it reads LEVRGLGILN. Glutamate 205 contributes to the Mg(2+) binding site. Arginine 248 is an active-site residue. The important for the catalytic mechanism of dephosphorylation stretch occupies residues 269–274; that stretch reads PVAAGR.

This sequence belongs to the HPrK/P family. In terms of assembly, homohexamer. The cofactor is Mg(2+).

The catalysed reaction is [HPr protein]-L-serine + ATP = [HPr protein]-O-phospho-L-serine + ADP + H(+). It carries out the reaction [HPr protein]-O-phospho-L-serine + phosphate + H(+) = [HPr protein]-L-serine + diphosphate. Its function is as follows. Catalyzes the ATP- as well as the pyrophosphate-dependent phosphorylation of a specific serine residue in HPr, a phosphocarrier protein of the phosphoenolpyruvate-dependent sugar phosphotransferase system (PTS). HprK/P also catalyzes the pyrophosphate-producing, inorganic phosphate-dependent dephosphorylation (phosphorolysis) of seryl-phosphorylated HPr (P-Ser-HPr). The polypeptide is HPr kinase/phosphorylase (Chromobacterium violaceum (strain ATCC 12472 / DSM 30191 / JCM 1249 / CCUG 213 / NBRC 12614 / NCIMB 9131 / NCTC 9757 / MK)).